We begin with the raw amino-acid sequence, 168 residues long: MSVMASDKACAPVRASRPFPKQKLRELVLQALYALEIDPEGEDSLVSLLMTEASVSKKNAAYALMFCRAIRANQPDLDALLDATIRTTTLARLTIIERNILRMMLFEHQQNQDCCPVPVAVLIAETTRLIKKFSYSEGSSLILAVLGSIFDHPAPALDAPLEPTSMCG.

The protein belongs to the NusB family.

Involved in transcription antitermination. Required for transcription of ribosomal RNA (rRNA) genes. Binds specifically to the boxA antiterminator sequence of the ribosomal RNA (rrn) operons. In Chlamydia trachomatis serovar D (strain ATCC VR-885 / DSM 19411 / UW-3/Cx), this protein is Transcription antitermination protein NusB.